The primary structure comprises 166 residues: Large ribosomal subunit protein mL49 (166 aa).

The tract at residues 56–78 (RIPDPPKHEHYPTPSGWQPPRDP) is disordered.

It belongs to the mitochondrion-specific ribosomal protein mL49 family. Interacts with OXA1L.

It localises to the mitochondrion. The protein is Large ribosomal subunit protein mL49 (MRPL49) of Macaca fascicularis (Crab-eating macaque).